The primary structure comprises 62 residues: Small EDRK-rich factor 1 (62 aa).

Composition is skewed to basic and acidic residues over residues 1–30 (MARG…KEDS) and 50–62 (AANE…TREK). A disordered region spans residues 1-62 (MARGNQRELA…ERKSMQTREK (62 aa)).

It belongs to the SERF family. As to quaternary structure, interacts with SNCA; this interaction promotes the aggregation of SNCA.

Its subcellular location is the cytoplasm. It localises to the cytosol. The protein resides in the nucleus. Positive regulator of amyloid protein aggregation and proteotoxicity. Induces conformational changes in amyloid proteins, such as APP, HTT, and SNCA, driving them into compact formations preceding the formation of aggregates. The polypeptide is Small EDRK-rich factor 1 (SERF1) (Bos taurus (Bovine)).